The primary structure comprises 311 residues: Ribosomal protein L11 methyltransferase (311 aa).

Positions 162, 183, 205, and 248 each coordinate S-adenosyl-L-methionine.

It belongs to the methyltransferase superfamily. PrmA family.

It localises to the cytoplasm. The enzyme catalyses L-lysyl-[protein] + 3 S-adenosyl-L-methionine = N(6),N(6),N(6)-trimethyl-L-lysyl-[protein] + 3 S-adenosyl-L-homocysteine + 3 H(+). Methylates ribosomal protein L11. This Bacillus pumilus (strain SAFR-032) protein is Ribosomal protein L11 methyltransferase.